The primary structure comprises 505 residues: MSEQNAQGADEVVDLNNEMKARREKLAALREQGIPFPNDFRRDRTSDQLHAEFDAKEAEELEALNIEVSVAGRMMTRRIMGKASFVTLQDVGGRIQLYVARDDLPEGVYNEQFKKWDLGDILGAKGKLFKTKTGELSIHCTELRLLTKALRPLPDKFHGLQDQEARYRQRYLDLISNDESRNTFKTRSKILAGIRQFMVARGFMEVETPMMQVIPGGASARPFITHHNALDLDMYLRIAPELYLKRLVVGGFERVFEINRNFRNEGISVRHNPEFTMMELYMAYADYKDLIELTESLFRTLAQDVLGTTQVPYGDEVFDFGKPFEKLTMHEAIKKYRPETDMADLDNFDSAKAIAESIGIHVEKSWGLGRIVTEIFDEVAEAHLIQPTFITEYPAEVSPLARRNDVNPEITDRFEFFIGGREIGNGFSELNDAEDQAQRFLDQVNAKAAGDDEAMFYDEDYVTALEHGLPPTAGLGIGIDRMVMLFTNSHTIRDVILFPAMRPVK.

The Mg(2+) site is built by glutamate 415 and glutamate 422.

It belongs to the class-II aminoacyl-tRNA synthetase family. As to quaternary structure, homodimer. Mg(2+) is required as a cofactor.

Its subcellular location is the cytoplasm. It catalyses the reaction tRNA(Lys) + L-lysine + ATP = L-lysyl-tRNA(Lys) + AMP + diphosphate. This is Lysine--tRNA ligase from Salmonella typhi.